We begin with the raw amino-acid sequence, 101 residues long: Large ribosomal subunit protein bL21 (101 aa).

The protein belongs to the bacterial ribosomal protein bL21 family. As to quaternary structure, part of the 50S ribosomal subunit. Contacts protein L20.

Functionally, this protein binds to 23S rRNA in the presence of protein L20. The polypeptide is Large ribosomal subunit protein bL21 (Anaeromyxobacter dehalogenans (strain 2CP-1 / ATCC BAA-258)).